The following is a 292-amino-acid chain: Beta-lactamase-like protein 2 homolog (292 aa).

Zn(2+) is bound by residues His-76, His-78, Asp-80, His-81, His-145, Asp-163, and His-198.

The protein belongs to the metallo-beta-lactamase superfamily. Glyoxalase II family.

The chain is Beta-lactamase-like protein 2 homolog from Drosophila melanogaster (Fruit fly).